A 346-amino-acid chain; its full sequence is Flap endonuclease 1 (346 aa).

Residues 1-102 (MGVTELGKLI…AEIEERRKAK (102 aa)) form an N-domain region. Residues aspartate 31, aspartate 84, glutamate 156, glutamate 158, aspartate 177, aspartate 179, and aspartate 239 each coordinate Mg(2+). The segment at 120–261 (EVAKYAKRAI…RALKLIWEFG (142 aa)) is I-domain.

This sequence belongs to the XPG/RAD2 endonuclease family. FEN1 subfamily. As to quaternary structure, interacts with PCNA. PCNA stimulates the nuclease activity without altering cleavage specificity. Mg(2+) serves as cofactor.

In terms of biological role, structure-specific nuclease with 5'-flap endonuclease and 5'-3' exonuclease activities involved in DNA replication and repair. During DNA replication, cleaves the 5'-overhanging flap structure that is generated by displacement synthesis when DNA polymerase encounters the 5'-end of a downstream Okazaki fragment. Binds the unpaired 3'-DNA end and kinks the DNA to facilitate 5' cleavage specificity. Cleaves one nucleotide into the double-stranded DNA from the junction in flap DNA, leaving a nick for ligation. Also involved in the base excision repair (BER) pathway. Acts as a genome stabilization factor that prevents flaps from equilibrating into structures that lead to duplications and deletions. Also possesses 5'-3' exonuclease activity on nicked or gapped double-stranded DNA. The protein is Flap endonuclease 1 of Pyrobaculum arsenaticum (strain DSM 13514 / JCM 11321 / PZ6).